The chain runs to 420 residues: Glucose-1-phosphate adenylyltransferase (420 aa).

Residues tyrosine 107, glycine 173, 188–189 (EK), and serine 206 each bind alpha-D-glucose 1-phosphate.

The protein belongs to the bacterial/plant glucose-1-phosphate adenylyltransferase family. In terms of assembly, homotetramer.

It catalyses the reaction alpha-D-glucose 1-phosphate + ATP + H(+) = ADP-alpha-D-glucose + diphosphate. It functions in the pathway glycan biosynthesis; glycogen biosynthesis. Functionally, involved in the biosynthesis of ADP-glucose, a building block required for the elongation reactions to produce glycogen. Catalyzes the reaction between ATP and alpha-D-glucose 1-phosphate (G1P) to produce pyrophosphate and ADP-Glc. This is Glucose-1-phosphate adenylyltransferase from Shewanella sp. (strain ANA-3).